A 268-amino-acid chain; its full sequence is MGCGIMKYGITEMVKTIDTKTRVVDVTNEIAKKKYQAIRDFLEGEEFKEVVIFGVYLWGNYTAQMLSKYADKVYLVDIHEFMKGFVPNNNSIKFLNLNEFKLKFIRGEVNPDLIVDLTGLGGIEPEFLAKFNPKVFIVEDPKGVFDVDIYEADNTYKRTAPFIEKAKVGVLKTYRKARVSKTSGTMTLTIDTIVDASREITSLDGVLYAIPNLRYYEGILFHENDIHKFLSEISQPAITISTLNDVLDEAEEILSNNINLIYSFVEEL.

This is an uncharacterized protein from Methanocaldococcus jannaschii (strain ATCC 43067 / DSM 2661 / JAL-1 / JCM 10045 / NBRC 100440) (Methanococcus jannaschii).